The chain runs to 128 residues: Ribonuclease pancreatic (128 aa).

The segment covering 1 to 15 has biased composition (basic and acidic residues); the sequence is SESSAKKFERQHMDS. The tract at residues 1 to 28 is disordered; that stretch reads SESSAKKFERQHMDSRGSPSTNPNYCNE. Positions 7 and 10 each coordinate substrate. The Proton acceptor role is filled by H12. 4 disulfides stabilise this stretch: C26–C84, C40–C95, C58–C110, and C65–C72. An N-linked (GlcNAc...) asparagine glycan is attached at N34. Substrate contacts are provided by residues 41–45, K66, and R85; that span reads KPVNT. The active-site Proton donor is the H119.

The protein belongs to the pancreatic ribonuclease family. Monomer. Interacts with and forms tight 1:1 complexes with RNH1. Dimerization of two such complexes may occur. Interaction with RNH1 inhibits this protein. Pancreas.

Its subcellular location is the secreted. The catalysed reaction is an [RNA] containing cytidine + H2O = an [RNA]-3'-cytidine-3'-phosphate + a 5'-hydroxy-ribonucleotide-3'-[RNA].. It carries out the reaction an [RNA] containing uridine + H2O = an [RNA]-3'-uridine-3'-phosphate + a 5'-hydroxy-ribonucleotide-3'-[RNA].. In terms of biological role, endonuclease that catalyzes the cleavage of RNA on the 3' side of pyrimidine nucleotides. Acts on single-stranded and double-stranded RNA. The polypeptide is Ribonuclease pancreatic (RNASE1) (Myocastor coypus (Coypu)).